A 186-amino-acid chain; its full sequence is Alkyl hydroperoxide reductase AhpD (186 aa).

Cys-132 serves as the catalytic Proton donor. Cysteines 132 and 135 form a disulfide. Residue Cys-135 is the Cysteine sulfenic acid (-SOH) intermediate of the active site.

It belongs to the AhpD family.

It catalyses the reaction N(6)-[(R)-dihydrolipoyl]-L-lysyl-[lipoyl-carrier protein] + a hydroperoxide = N(6)-[(R)-lipoyl]-L-lysyl-[lipoyl-carrier protein] + an alcohol + H2O. Antioxidant protein with alkyl hydroperoxidase activity. Required for the reduction of the AhpC active site cysteine residues and for the regeneration of the AhpC enzyme activity. This Anaeromyxobacter sp. (strain K) protein is Alkyl hydroperoxide reductase AhpD.